A 367-amino-acid chain; its full sequence is Serine/threonine-protein kinase Sgk2 (367 aa).

The segment at 1–28 is disordered; that stretch reads MASSPVGVPSPQPSRANGNINLGPSANP. Phosphoserine is present on Ser-10. Positions 15–28 are enriched in polar residues; the sequence is RANGNINLGPSANP. The 258-residue stretch at 35-292 folds into the Protein kinase domain; sequence FDFLKVIGKG…FLDIKNHMFF (258 aa). ATP contacts are provided by residues 41 to 49 and Lys-64; that span reads IGKGNYGKV. The Nuclear localization signal signature appears at 68–78; it reads KKSILKNKEQN. The Proton acceptor role is filled by Asp-159. Thr-193 is subject to Phosphothreonine; by PDPK1. The AGC-kinase C-terminal domain occupies 293-367; sequence SPINWDDLYH…AQDDDDILDS (75 aa). A phosphoserine mark is found at Ser-334 and Ser-356. The residue at position 357 (Tyr-357) is a Phosphotyrosine.

This sequence belongs to the protein kinase superfamily. AGC Ser/Thr protein kinase family. Post-translationally, activated by phosphorylation on Ser-356 by an unknown kinase (may be mTORC2 but not confirmed), transforming it into a substrate for PDPK1 which then phosphorylates it on Thr-193.

The protein resides in the cytoplasm. The protein localises to the nucleus. The catalysed reaction is L-seryl-[protein] + ATP = O-phospho-L-seryl-[protein] + ADP + H(+). The enzyme catalyses L-threonyl-[protein] + ATP = O-phospho-L-threonyl-[protein] + ADP + H(+). Two specific sites, one in the kinase domain (Thr-193) and the other in the C-terminal regulatory region (Ser-356), need to be phosphorylated for its full activation. Serine/threonine-protein kinase which is involved in the regulation of a wide variety of ion channels, membrane transporters, cell growth, survival and proliferation. Up-regulates Na(+) channels: SCNN1A/ENAC, K(+) channels: KCNA3/Kv1.3, KCNE1 and KCNQ1, amino acid transporter: SLC6A19, glutamate transporter: SLC1A6/EAAT4, glutamate receptors: GRIA1/GLUR1 and GRIK2/GLUR6, Na(+)/H(+) exchanger: SLC9A3/NHE3, and the Na(+)/K(+) ATPase. The sequence is that of Serine/threonine-protein kinase Sgk2 (Sgk2) from Mus musculus (Mouse).